A 140-amino-acid polypeptide reads, in one-letter code: Large ribosomal subunit protein uL16 (140 aa).

This sequence belongs to the universal ribosomal protein uL16 family. As to quaternary structure, part of the 50S ribosomal subunit.

Binds 23S rRNA and is also seen to make contacts with the A and possibly P site tRNAs. The chain is Large ribosomal subunit protein uL16 from Cytophaga hutchinsonii (strain ATCC 33406 / DSM 1761 / CIP 103989 / NBRC 15051 / NCIMB 9469 / D465).